The following is a 201-amino-acid chain: Imidazoleglycerol-phosphate dehydratase (201 aa).

The protein belongs to the imidazoleglycerol-phosphate dehydratase family.

It is found in the cytoplasm. It catalyses the reaction D-erythro-1-(imidazol-4-yl)glycerol 3-phosphate = 3-(imidazol-4-yl)-2-oxopropyl phosphate + H2O. Its pathway is amino-acid biosynthesis; L-histidine biosynthesis; L-histidine from 5-phospho-alpha-D-ribose 1-diphosphate: step 6/9. The chain is Imidazoleglycerol-phosphate dehydratase from Synechococcus sp. (strain CC9902).